Reading from the N-terminus, the 602-residue chain is Protein NRT1/ PTR FAMILY 5.7 (602 aa).

The next 2 membrane-spanning stretches (helical) occupy residues L56–L73 and W87–G107. Phosphothreonine is present on T111. A run of 10 helical transmembrane segments spans residues V112–I132, I152–L172, W197–E217, I220–F240, V337–A357, I381–I401, I422–L442, I465–L485, L500–I520, and F548–M568.

Belongs to the major facilitator superfamily. Proton-dependent oligopeptide transporter (POT/PTR) (TC 2.A.17) family. Expressed in shoots, stems, leaves and flowers.

Its subcellular location is the membrane. The sequence is that of Protein NRT1/ PTR FAMILY 5.7 (NPF5.7) from Arabidopsis thaliana (Mouse-ear cress).